The following is a 100-amino-acid chain: NADH-quinone oxidoreductase subunit K 2 (100 aa).

A run of 3 helical transmembrane segments spans residues 2 to 22 (LAIENYLILSAILFAIGTIGV), 29 to 49 (IVIFMCIELMLNAVNLTFIAF), and 61 to 81 (FVFFVMTVAAAEAAVGLALMI).

The protein belongs to the complex I subunit 4L family. As to quaternary structure, NDH-1 is composed of 14 different subunits. Subunits NuoA, H, J, K, L, M, N constitute the membrane sector of the complex.

It is found in the cell inner membrane. It catalyses the reaction a quinone + NADH + 5 H(+)(in) = a quinol + NAD(+) + 4 H(+)(out). In terms of biological role, NDH-1 shuttles electrons from NADH, via FMN and iron-sulfur (Fe-S) centers, to quinones in the respiratory chain. The immediate electron acceptor for the enzyme in this species is believed to be ubiquinone. Couples the redox reaction to proton translocation (for every two electrons transferred, four hydrogen ions are translocated across the cytoplasmic membrane), and thus conserves the redox energy in a proton gradient. This is NADH-quinone oxidoreductase subunit K 2 from Geobacter sp. (strain M21).